The following is a 481-amino-acid chain: Phosphoglycerate kinase, chloroplastic (481 aa).

The transit peptide at 1 to 75 (MASATASHTL…SSKPIRGVAS (75 aa)) directs the protein to the chloroplast. (2R)-3-phosphoglycerate is bound by residues A98, D99, N101, R115, S137, H138, G140, R141, R196, H228, and R229. G274 is a binding site for ADP. CDP is bound at residue G274. K276 and K280 together coordinate AMP. Position 280 (K280) interacts with ATP. Residue G298 coordinates ADP. G298 contacts CDP. Positions 299 and 371 each coordinate AMP. Residues G299 and G371 each coordinate ATP. 2 residues coordinate CDP: G396 and F401. F401 serves as a coordination point for ADP. E402 contacts AMP. Residues E402, D433, and S434 each coordinate ATP. A Mg(2+)-binding site is contributed by D433.

It belongs to the phosphoglycerate kinase family. Monomer. The cofactor is Mg(2+).

It is found in the plastid. It localises to the chloroplast. It carries out the reaction (2R)-3-phosphoglycerate + ATP = (2R)-3-phospho-glyceroyl phosphate + ADP. Its pathway is carbohydrate biosynthesis; Calvin cycle. The polypeptide is Phosphoglycerate kinase, chloroplastic (Nicotiana tabacum (Common tobacco)).